A 369-amino-acid polypeptide reads, in one-letter code: S-(hydroxymethyl)glutathione dehydrogenase (369 aa).

Residues C40, H62, C92, C95, C98, C106, and C169 each contribute to the Zn(2+) site.

This sequence belongs to the zinc-containing alcohol dehydrogenase family. Class-III subfamily. Homodimer. The cofactor is Zn(2+).

Its subcellular location is the cytoplasm. It catalyses the reaction S-(hydroxymethyl)glutathione + NADP(+) = S-formylglutathione + NADPH + H(+). The enzyme catalyses S-(hydroxymethyl)glutathione + NAD(+) = S-formylglutathione + NADH + H(+). The catalysed reaction is a primary alcohol + NAD(+) = an aldehyde + NADH + H(+). It carries out the reaction a secondary alcohol + NAD(+) = a ketone + NADH + H(+). It catalyses the reaction S-nitrosoglutathione + NADH + H(+) = S-(hydroxysulfenamide)glutathione + NAD(+). Its function is as follows. Has high formaldehyde dehydrogenase activity in the presence of glutathione and catalyzes the oxidation of normal alcohols in a reaction that is not GSH-dependent. In addition, hemithiolacetals other than those formed from GSH, including omega-thiol fatty acids, also are substrates. Also acts as a S-nitroso-glutathione reductase by catalyzing the NADH-dependent reduction of S-nitrosoglutathione. The sequence is that of S-(hydroxymethyl)glutathione dehydrogenase (frmA) from Photobacterium damsela subsp. piscicida (Pasteurella piscicida).